The primary structure comprises 503 residues: ATP synthase subunit alpha (503 aa).

ATP is bound at residue 170–177 (GDKQTGKT).

This sequence belongs to the ATPase alpha/beta chains family. As to quaternary structure, F-type ATPases have 2 components, CF(1) - the catalytic core - and CF(0) - the membrane proton channel. CF(1) has five subunits: alpha(3), beta(3), gamma(1), delta(1), epsilon(1). CF(0) has three main subunits: a(1), b(2) and c(9-12). The alpha and beta chains form an alternating ring which encloses part of the gamma chain. CF(1) is attached to CF(0) by a central stalk formed by the gamma and epsilon chains, while a peripheral stalk is formed by the delta and b chains.

It is found in the cell inner membrane. It catalyses the reaction ATP + H2O + 4 H(+)(in) = ADP + phosphate + 5 H(+)(out). Its function is as follows. Produces ATP from ADP in the presence of a proton gradient across the membrane. The alpha chain is a regulatory subunit. This chain is ATP synthase subunit alpha, found in Helicobacter pylori (strain HPAG1).